Consider the following 510-residue polypeptide: NAD(P)H-quinone oxidoreductase subunit 2 A, chloroplastic (510 aa).

The next 13 helical transmembrane spans lie at F31 to T51, T57 to F77, I99 to I119, M124 to C144, L149 to Y169, Y183 to G203, I229 to F249, W295 to I315, M323 to D343, Y354 to L374, A395 to F415, L418 to L438, and M484 to I504.

It belongs to the complex I subunit 2 family. As to quaternary structure, NDH is composed of at least 16 different subunits, 5 of which are encoded in the nucleus.

Its subcellular location is the plastid. It is found in the chloroplast thylakoid membrane. The enzyme catalyses a plastoquinone + NADH + (n+1) H(+)(in) = a plastoquinol + NAD(+) + n H(+)(out). The catalysed reaction is a plastoquinone + NADPH + (n+1) H(+)(in) = a plastoquinol + NADP(+) + n H(+)(out). In terms of biological role, NDH shuttles electrons from NAD(P)H:plastoquinone, via FMN and iron-sulfur (Fe-S) centers, to quinones in the photosynthetic chain and possibly in a chloroplast respiratory chain. The immediate electron acceptor for the enzyme in this species is believed to be plastoquinone. Couples the redox reaction to proton translocation, and thus conserves the redox energy in a proton gradient. The protein is NAD(P)H-quinone oxidoreductase subunit 2 A, chloroplastic of Nymphaea alba (White water-lily).